Reading from the N-terminus, the 218-residue chain is Uracil-DNA glycosylase (218 aa).

Asp-59 functions as the Proton acceptor in the catalytic mechanism.

The protein belongs to the uracil-DNA glycosylase (UDG) superfamily. UNG family.

It is found in the cytoplasm. It catalyses the reaction Hydrolyzes single-stranded DNA or mismatched double-stranded DNA and polynucleotides, releasing free uracil.. Functionally, excises uracil residues from the DNA which can arise as a result of misincorporation of dUMP residues by DNA polymerase or due to deamination of cytosine. This Staphylococcus aureus (strain bovine RF122 / ET3-1) protein is Uracil-DNA glycosylase.